Here is a 92-residue protein sequence, read N- to C-terminus: N(2)-fixation sustaining protein CowN (92 aa).

This sequence belongs to the CowN family.

Is required to sustain N(2)-dependent growth in the presence of low levels of carbon monoxide (CO). Probably acts by protecting the N(2) fixation ability of the nitrogenase complex, which is inactivated in the presence of CO. The chain is N(2)-fixation sustaining protein CowN from Rhodobacter capsulatus (strain ATCC BAA-309 / NBRC 16581 / SB1003).